We begin with the raw amino-acid sequence, 459 residues long: MSFNFIKDKDKKIHFIGIGGISMSGLAAVLLNSGYSVSGSDFKDSAIIDKLRSSGAEIYIGHRRENINNVDLVVYTAAIPSDNPELLEAKEKNIALMDRAEFLGQIMKGHKYSVAISGTHGKTTCTSMLSHITLADNLDPTILVGGELDAIGGNFRIGNSEYFLTEACEYKRSFLKFPPYVGIILNIDSDHLDYYKDIDEIADTFLQFSRLIPEDGYLVGYADDQRVNEILSETNCNTLSYGFSDNANLTAKNIHFNTNGCATFDVYKDGNNLFNITLNVPGKHNILNALASICVSLIFNISNDCIIEGLSNCKGAHKRFEYKGKLNGVTVIDDYAHHPTEIKATLSTAKQMNHNKTYCIFQPHTYTRTKALFDEFTECFNDADELILMDIYAAREKNTGLVSSDELGDALRNKGLKCINVHSHDEALNYVKSKLVSGDLLLTVGAGDVVIVGEKYLKA.

Residue 118 to 124 coordinates ATP; sequence GTHGKTT.

This sequence belongs to the MurCDEF family.

The protein resides in the cytoplasm. It carries out the reaction UDP-N-acetyl-alpha-D-muramate + L-alanine + ATP = UDP-N-acetyl-alpha-D-muramoyl-L-alanine + ADP + phosphate + H(+). The protein operates within cell wall biogenesis; peptidoglycan biosynthesis. In terms of biological role, cell wall formation. The chain is UDP-N-acetylmuramate--L-alanine ligase from Clostridium beijerinckii (strain ATCC 51743 / NCIMB 8052) (Clostridium acetobutylicum).